The primary structure comprises 461 residues: Xyloglucan 6-xylosyltransferase 2 (461 aa).

Residues Met1–Gln20 are Cytoplasmic-facing. A helical; Signal-anchor for type II membrane protein transmembrane segment spans residues Leu21–Gly40. Residues Ala41–Val461 lie on the Lumenal side of the membrane. The interval Gln74–Glu95 is disordered. A glycan (N-linked (GlcNAc...) asparagine) is linked at Asn432.

Belongs to the glycosyltransferase 34 family. In terms of assembly, homodimer. Interacts with XXT1 and XXT5. Interacts with FUT1 and XLT2.

Its subcellular location is the golgi apparatus membrane. It carries out the reaction Transfers an alpha-D-xylosyl residue from UDP-D-xylose to a glucose residue in xyloglucan, forming an alpha-(1-&gt;6)-D-xylosyl-D-glucose linkage.. Functionally, xylosyltransferase specific to UDP-D-xylose that accepts both cellopentaose and cellohexaose as substrates, with a better use of cellohexaose, to produce xyloglucan. Adds preferentially the first xylosyl residue to the fourth glucosyl residue from the reducing end of both acceptors. Transfer one xylose mainly to the second glucose residue from the non-reducing end. The acceptor should have a minimum of four glucose residues. Associates with other xyloglucan-synthesizing enzymes to form multiprotein complexes for xyloglucan synthesis in the Golgi. The chain is Xyloglucan 6-xylosyltransferase 2 (XXT2) from Arabidopsis thaliana (Mouse-ear cress).